The chain runs to 112 residues: Large ribosomal subunit protein uL18 (112 aa).

This sequence belongs to the universal ribosomal protein uL18 family. Part of the 50S ribosomal subunit; part of the 5S rRNA/L5/L18/L25 subcomplex. Contacts the 5S and 23S rRNAs.

Functionally, this is one of the proteins that bind and probably mediate the attachment of the 5S RNA into the large ribosomal subunit, where it forms part of the central protuberance. The chain is Large ribosomal subunit protein uL18 from Deinococcus deserti (strain DSM 17065 / CIP 109153 / LMG 22923 / VCD115).